A 323-amino-acid polypeptide reads, in one-letter code: Phosphatidylglycerol--prolipoprotein diacylglyceryl transferase (323 aa).

Helical transmembrane passes span 15–35 (VIQGIPITWYSLSYIFIILIS), 58–78 (FMFSLVLGAILGGRLASTLVY), and 106–126 (GMAIHGGFLGAIIAPLITINT). Arg156 is a binding site for a 1,2-diacyl-sn-glycero-3-phospho-(1'-sn-glycerol). Transmembrane regions (helical) follow at residues 242-262 (GFIFGVYIMLYAFFRFFIEYL) and 289-309 (ISMGQILSLALMLSGLIWIIV).

It belongs to the Lgt family.

It is found in the cell inner membrane. The catalysed reaction is L-cysteinyl-[prolipoprotein] + a 1,2-diacyl-sn-glycero-3-phospho-(1'-sn-glycerol) = an S-1,2-diacyl-sn-glyceryl-L-cysteinyl-[prolipoprotein] + sn-glycerol 1-phosphate + H(+). Its pathway is protein modification; lipoprotein biosynthesis (diacylglyceryl transfer). In terms of biological role, catalyzes the transfer of the diacylglyceryl group from phosphatidylglycerol to the sulfhydryl group of the N-terminal cysteine of a prolipoprotein, the first step in the formation of mature lipoproteins. This Borreliella afzelii (strain PKo) (Borrelia afzelii) protein is Phosphatidylglycerol--prolipoprotein diacylglyceryl transferase.